Consider the following 394-residue polypeptide: Proliferation-associated protein 2G4 (394 aa).

Residue S2 is modified to N-acetylserine. S2 bears the Phosphoserine mark. A necessary for nucleolar localization region spans residues 2-48; that stretch reads SGEDEQQEQTIAEDLVVTKYKMGGDIANRVLRSLVEASSSGVSVLSL. Residues 46–54 are RNA-binding; sequence LSLCEKGDA. K298 is covalently cross-linked (Glycyl lysine isopeptide (Lys-Gly) (interchain with G-Cter in SUMO2)). Residues 301–394 form a necessary for nucleolar localization region; that stretch reads LLQPFNVLYE…ETLEENEAGD (94 aa). S335 is modified (phosphoserine). The tract at residues 358-394 is disordered; that stretch reads LQSSASRKTQKKKKKKASKTAENATSGETLEENEAGD. S361 is subject to Phosphoserine; by PKC/PRKCD. The interval 361–375 is interaction with RNA; it reads SASRKTQKKKKKKAS. Over residues 365–375 the composition is skewed to basic residues; the sequence is KTQKKKKKKAS. A phosphothreonine mark is found at T366 and T386.

Belongs to the peptidase M24 family. As to quaternary structure, isoform 2 interacts with the cytoplasmic domain of non-phosphorylated ERBB3; the interaction requires PKC activity. Interacts with AR. Treatment with HRG leads to dissociation from ERBB3 and increases association with AR. Interacts with NCL/nucleolin. Component of a ribonucleoprotein complex containing at least PA2G4, NCL, TOP1, PABPC2, RPLP0, acetylated histone H1 (HIST1H1A or H1F1), histone H1 2/4, RPL4, RPL8, RPL15, RPL18, RPL18A, RPL21, RPL11, RPL12, RPL28, RPL27, RPLP2 and RPL24. Interacts with HDAC2. Interacts with RB1; the interaction is enhanced upon PA2G4 dephosphorylation. Interacts with AKT1. Isoform 1 and isoform 2 interact with RNF20. Isoform 2 interacts with HUWE1. Interacts with DNAJC21. Phosphorylated on serine and threonine residues. Phosphorylation is enhanced by HRG treatment. Basal phosphorylation is PKC-dependent and HRG-induced phosphorylation is predominantly PKC-independent. Phosphorylation at Ser-361 by PKC/PRKCD regulates its nucleolar localization. Post-translationally, in cancer cells, isoform 2 is polyubiquitinated leading to its proteasomal degradation and phosphorylation by PKC/PRKCD enhances polyubiquitination. In terms of tissue distribution, isoform 2 is undetectable whereas isoform 1 is strongly expressed in cancer cells (at protein level). Isoform 1 and isoform 2 are widely expressed, including heart, brain, lung, pancreas, skeletal muscle, kidney, placenta and liver.

The protein resides in the cytoplasm. It is found in the nucleus. Its subcellular location is the nucleolus. In terms of biological role, may play a role in a ERBB3-regulated signal transduction pathway. Seems be involved in growth regulation. Acts a corepressor of the androgen receptor (AR) and is regulated by the ERBB3 ligand neuregulin-1/heregulin (HRG). Inhibits transcription of some E2F1-regulated promoters, probably by recruiting histone acetylase (HAT) activity. Binds RNA. Associates with 28S, 18S and 5.8S mature rRNAs, several rRNA precursors and probably U3 small nucleolar RNA. May be involved in regulation of intermediate and late steps of rRNA processing. May be involved in ribosome assembly. Mediates cap-independent translation of specific viral IRESs (internal ribosomal entry site). Regulates cell proliferation, differentiation, and survival. Isoform 1 suppresses apoptosis whereas isoform 2 promotes cell differentiation. This Homo sapiens (Human) protein is Proliferation-associated protein 2G4 (PA2G4).